The chain runs to 186 residues: Elongation factor P (186 aa).

The protein belongs to the elongation factor P family.

The protein resides in the cytoplasm. Its pathway is protein biosynthesis; polypeptide chain elongation. Its function is as follows. Involved in peptide bond synthesis. Stimulates efficient translation and peptide-bond synthesis on native or reconstituted 70S ribosomes in vitro. Probably functions indirectly by altering the affinity of the ribosome for aminoacyl-tRNA, thus increasing their reactivity as acceptors for peptidyl transferase. This Enterococcus faecalis (strain ATCC 700802 / V583) protein is Elongation factor P.